We begin with the raw amino-acid sequence, 309 residues long: Taste receptor type 2 member 64 (309 aa).

Over Met1 to Tyr3 the chain is Extracellular. The chain crosses the membrane as a helical span at residues Phe4–Phe26. Topologically, residues Val27–Gln46 are cytoplasmic. Residues Ile47–Asn69 form a helical membrane-spanning segment. The Extracellular portion of the chain corresponds to Val70–Val83. The helical transmembrane segment at Ala84–Tyr106 threads the bilayer. At Leu107–Arg126 the chain is on the cytoplasmic side. Residues Ser127–Met149 form a helical membrane-spanning segment. The Extracellular portion of the chain corresponds to Asp150–Asp176. An N-linked (GlcNAc...) asparagine glycan is attached at Asn161. Residues Leu177–Ile199 traverse the membrane as a helical segment. Over Cys200 to Thr230 the chain is Cytoplasmic. Residues Val231–Trp253 traverse the membrane as a helical segment. Residues Thr254–Lys258 are Extracellular-facing. Residues Leu259 to Met281 form a helical membrane-spanning segment. Topologically, residues Gly282–Pro309 are cytoplasmic.

It belongs to the G-protein coupled receptor T2R family.

It localises to the membrane. Receptor that may play a role in the perception of bitterness and is gustducin-linked. May play a role in sensing the chemical composition of the gastrointestinal content. The activity of this receptor may stimulate alpha gustducin, mediate PLC-beta-2 activation and lead to the gating of TRPM5. This Pan paniscus (Pygmy chimpanzee) protein is Taste receptor type 2 member 64 (TAS2R64).